Here is a 163-residue protein sequence, read N- to C-terminus: Nucleotide-binding protein BCG9842_B4128 (163 aa).

It belongs to the YajQ family.

Functionally, nucleotide-binding protein. This is Nucleotide-binding protein BCG9842_B4128 from Bacillus cereus (strain G9842).